The chain runs to 811 residues: Zinc finger protein 839 (811 aa).

The segment at 197 to 222 adopts a C2H2-type zinc-finger fold; the sequence is FKCQTCEKSYIGKGGLARHFKLNPGH. Disordered stretches follow at residues 329–349, 455–555, and 612–654; these read QRRA…RASP, PDNL…NGSV, and ALEH…AEAG. Residues 476 to 485 show a composition bias toward basic and acidic residues; that stretch reads SSEKREREAA. Positions 501–510 are enriched in polar residues; the sequence is SNDTTESLAA.

The protein is Zinc finger protein 839 (ZNF839) of Homo sapiens (Human).